The following is a 698-amino-acid chain: Sucrose non-fermenting protein kinase 1 (698 aa).

Residues Met1 to Pro48 are disordered. The 252-residue stretch at Tyr62–Phe313 folds into the Protein kinase domain. Residues Leu68–Val76 and Lys91 each bind ATP. The active-site Proton acceptor is the Asp184. The auto-inhibitory domain (AID) stretch occupies residues Tyr320–Pro417. A UBA domain is found at Val360 to Asn397. 3 disordered regions span residues Leu410–Ala435, Thr482–Lys525, and Glu564–Met597. Low complexity predominate over residues Ser415 to Ala435. Composition is skewed to basic and acidic residues over residues Thr484–Arg493 and Glu564–Glu573.

It belongs to the protein kinase superfamily. CAMK Ser/Thr protein kinase family. SNF1 subfamily. As to quaternary structure, component of the AMP-activated protein kinase complex also known as the SNF1 kinase complex (Snf1c), a heterotrimeric complex composed of a catalytic subunit alpha and 2 regulatory subunits beta and gamma.

Its subcellular location is the cytoplasm. It localises to the nucleus. It catalyses the reaction L-seryl-[protein] + ATP = O-phospho-L-seryl-[protein] + ADP + H(+). The enzyme catalyses L-threonyl-[protein] + ATP = O-phospho-L-threonyl-[protein] + ADP + H(+). In terms of biological role, catalytic subunit of the AMP-activated protein kinase complex also known as the SNF1 kinase complex (Snf1c), a central regulator of cellular energy homeostasis, which, in response to a fall in intracellular ATP levels, activates energy-producing pathways and inhibits energy-consuming processes. The complex phosphorylates histone H3 to form H3S10ph, which promotes H3K14ac formation, leading to transcriptional activation through TBP recruitment to the promoters. Activates the expression of the galactose oxidase (GOA) gene and of several cell wall-degrading enzymes (CWDEs) such as pectate lyase, xylanase and glucanase. Plays an important role in sudden death syndrome (SDS) by controlling the colonization of the infected roots. The sequence is that of Sucrose non-fermenting protein kinase 1 from Fusarium virguliforme.